The sequence spans 365 residues: Probable caffeine synthase 2 (365 aa).

Tyr-19 lines the S-adenosyl-L-homocysteine pocket. Thr-26 provides a ligand contact to caffeine. Cys-62, Asp-99, Leu-100, Ser-134, and Phe-135 together coordinate S-adenosyl-L-homocysteine. 3 residues coordinate caffeine: Tyr-152, His-155, and Trp-156. Asn-173 contacts Mg(2+). Arg-221 contributes to the caffeine binding site. The Mg(2+) site is built by Asp-259, Phe-261, and Asn-262. Phe-317 lines the caffeine pocket.

Belongs to the methyltransferase superfamily. Type-7 methyltransferase family. Requires Mg(2+) as cofactor.

It catalyses the reaction 7-methylxanthine + S-adenosyl-L-methionine = theobromine + S-adenosyl-L-homocysteine + H(+). The catalysed reaction is theobromine + S-adenosyl-L-methionine = caffeine + S-adenosyl-L-homocysteine + H(+). It carries out the reaction 1,7-dimethylxanthine + S-adenosyl-L-methionine = caffeine + S-adenosyl-L-homocysteine + H(+). The protein operates within alkaloid biosynthesis. Functionally, may be involved in the biosynthesis of caffeine. Catalyzes the conversion of 7-methylxanthine (7mX) to theobromine and of theobromine to caffeine. Has 1-N-methylation activity. The chain is Probable caffeine synthase 2 from Camellia sinensis (Tea plant).